Reading from the N-terminus, the 388-residue chain is Phosphoglycerate kinase (388 aa).

Substrate-binding positions include 21-23 (DLN), Arg36, 59-62 (HLGR), Arg114, and Arg147. ATP is bound by residues Lys198, Glu315, and 341-344 (GGDT).

Belongs to the phosphoglycerate kinase family. In terms of assembly, monomer.

The protein localises to the cytoplasm. The enzyme catalyses (2R)-3-phosphoglycerate + ATP = (2R)-3-phospho-glyceroyl phosphate + ADP. It participates in carbohydrate degradation; glycolysis; pyruvate from D-glyceraldehyde 3-phosphate: step 2/5. In Hahella chejuensis (strain KCTC 2396), this protein is Phosphoglycerate kinase.